Here is a 341-residue protein sequence, read N- to C-terminus: Methionine import ATP-binding protein MetN (341 aa).

An ABC transporter domain is found at 2 to 241 (IELNQIVKRY…PQHDVTKRFV (240 aa)). Position 38–45 (38–45 (GFSGAGKS)) interacts with ATP.

This sequence belongs to the ABC transporter superfamily. Methionine importer (TC 3.A.1.24) family. In terms of assembly, the complex is composed of two ATP-binding proteins (MetN), two transmembrane proteins (MetI) and a solute-binding protein (MetQ).

The protein resides in the cell membrane. The enzyme catalyses L-methionine(out) + ATP + H2O = L-methionine(in) + ADP + phosphate + H(+). It catalyses the reaction D-methionine(out) + ATP + H2O = D-methionine(in) + ADP + phosphate + H(+). Functionally, part of the ABC transporter complex MetNIQ involved in methionine import. Responsible for energy coupling to the transport system. The protein is Methionine import ATP-binding protein MetN of Staphylococcus saprophyticus subsp. saprophyticus (strain ATCC 15305 / DSM 20229 / NCIMB 8711 / NCTC 7292 / S-41).